A 715-amino-acid chain; its full sequence is Polyribonucleotide nucleotidyltransferase (715 aa).

Mg(2+) is bound by residues D493 and D499. A KH domain is found at 560–619 (PRMITIKINPEKIRDVIGKGGSVIRALTEETGTTIDISDDGVVTIASTSSEGMAEAKKRI). The 69-residue stretch at 629–697 (GQVYEGTVLK…EKGRVRLSAK (69 aa)) folds into the S1 motif domain.

This sequence belongs to the polyribonucleotide nucleotidyltransferase family. Requires Mg(2+) as cofactor.

The protein localises to the cytoplasm. It catalyses the reaction RNA(n+1) + phosphate = RNA(n) + a ribonucleoside 5'-diphosphate. Functionally, involved in mRNA degradation. Catalyzes the phosphorolysis of single-stranded polyribonucleotides processively in the 3'- to 5'-direction. The protein is Polyribonucleotide nucleotidyltransferase of Burkholderia vietnamiensis (strain G4 / LMG 22486) (Burkholderia cepacia (strain R1808)).